Consider the following 621-residue polypeptide: UvrABC system protein C (621 aa).

Positions 20 to 106 (TQSGIYQFFD…IKSLKPKYNI (87 aa)) constitute a GIY-YIG domain. Positions 212–247 (KALLKILESKMHTLSHNLQFEEAAIMRDRIQKITQM) constitute a UVR domain.

Belongs to the UvrC family. As to quaternary structure, interacts with UvrB in an incision complex.

It localises to the cytoplasm. The UvrABC repair system catalyzes the recognition and processing of DNA lesions. UvrC both incises the 5' and 3' sides of the lesion. The N-terminal half is responsible for the 3' incision and the C-terminal half is responsible for the 5' incision. The sequence is that of UvrABC system protein C from Helicobacter hepaticus (strain ATCC 51449 / 3B1).